A 384-amino-acid chain; its full sequence is S-adenosylmethionine synthase (384 aa).

Residue histidine 15 participates in ATP binding. Aspartate 17 lines the Mg(2+) pocket. Residue glutamate 43 participates in K(+) binding. L-methionine contacts are provided by glutamate 56 and glutamine 99. The segment at 99–109 (QSPDINQGVDK) is flexible loop. ATP-binding positions include 164–166 (DAK), 230–231 (RF), aspartate 239, 245–246 (RK), alanine 262, and lysine 266. Aspartate 239 lines the L-methionine pocket. Lysine 270 provides a ligand contact to L-methionine.

The protein belongs to the AdoMet synthase family. Homotetramer; dimer of dimers. Mg(2+) is required as a cofactor. K(+) serves as cofactor.

The protein localises to the cytoplasm. It catalyses the reaction L-methionine + ATP + H2O = S-adenosyl-L-methionine + phosphate + diphosphate. It functions in the pathway amino-acid biosynthesis; S-adenosyl-L-methionine biosynthesis; S-adenosyl-L-methionine from L-methionine: step 1/1. Functionally, catalyzes the formation of S-adenosylmethionine (AdoMet) from methionine and ATP. The overall synthetic reaction is composed of two sequential steps, AdoMet formation and the subsequent tripolyphosphate hydrolysis which occurs prior to release of AdoMet from the enzyme. This chain is S-adenosylmethionine synthase, found in Vibrio vulnificus (strain YJ016).